The following is a 265-amino-acid chain: Methyl-coenzyme M reductase II subunit gamma (265 aa).

R123 is a binding site for coenzyme M.

It belongs to the methyl-coenzyme M reductase gamma subunit family. As to quaternary structure, MCR is a hexamer of two alpha, two beta, and two gamma chains, forming a dimer of heterotrimers. The cofactor is coenzyme F430.

The catalysed reaction is coenzyme B + methyl-coenzyme M = methane + coenzyme M-coenzyme B heterodisulfide. Its pathway is one-carbon metabolism; methyl-coenzyme M reduction; methane from methyl-coenzyme M: step 1/1. Component of the methyl-coenzyme M reductase (MCR) I that catalyzes the reductive cleavage of methyl-coenzyme M (CoM-S-CH3 or 2-(methylthio)ethanesulfonate) using coenzyme B (CoB or 7-mercaptoheptanoylthreonine phosphate) as reductant which results in the production of methane and the mixed heterodisulfide of CoB and CoM (CoM-S-S-CoB). This is the final step in methanogenesis. The polypeptide is Methyl-coenzyme M reductase II subunit gamma (mrtG) (Methanothermobacter marburgensis (strain ATCC BAA-927 / DSM 2133 / JCM 14651 / NBRC 100331 / OCM 82 / Marburg) (Methanobacterium thermoautotrophicum)).